We begin with the raw amino-acid sequence, 540 residues long: MQSSEVKPFSRLRAYLCPIYKSEFSKFVPLFLLAFFVGFNYCLLKNMKDTLVIVGSDAGAEVIPFLKVWGIVPGAVIVTMVYGWLGSRYPRDTVFYCFMAAFLGFFFLFAVIIYPVGDSLHLNSLADKLQELLPQGLRGFIVMVRYWSYSIYYVMSELWSSVVLSMLFWGLANQITTITEAGRFYALINTGLNLSSICAGEISYWMGKQTFVAYSFACDSWHSVMLNLTMLITCSGLIMIWLYRRIHHLTIDTSIPPSRRVLAEEGAATANLKEKKKPKAKARNLFLHLIQSRYLLGLAIIVLSYNLVIHLFEVVWKDQVSQIYSSHVEFNGYMSRITTLIGVVSVLAAVLLTGQCIRKWGWTVGALVTPLVMLVSGLLFFGTIFAAKRDISIFGGVLGMTPLALAAWTGGMQNVLSRGTKFTFFDQTKEMAFIPLSPEDKNHGKAAIDGVVSRIGKSGGSLIYQGLLVIFSSVAASLNVIALVLLIIMVVWIAVVAYIGKEYYSRAADAVATLKQPKEPSSSIVREAQESVEQEEMAVL.

11 helical membrane passes run 24–44, 62–82, 94–114, 151–171, 223–243, 295–315, 337–357, 367–387, 391–411, 458–478, and 480–500; these read FSKF…YCLL, VIPF…TMVY, VFYC…VIIY, IYYV…FWGL, SVML…IWLY, LLGL…FEVV, ITTL…GQCI, LVTP…IFAA, ISIF…WTGG, SGGS…AASL, and VIAL…AYIG.

It belongs to the ADP/ATP translocase tlc family.

The protein localises to the cell membrane. This is ADP,ATP carrier protein 2 (tlcB) from Chlamydia pneumoniae (Chlamydophila pneumoniae).